The chain runs to 386 residues: Ribonucleoside-diphosphate reductase subunit M2 (386 aa).

The span at 1 to 24 (MSSTRSPLKTKNENTISTKMNNMS) shows a compositional bias: polar residues. The segment at 1-36 (MSSTRSPLKTKNENTISTKMNNMSFVDKENTPPSLS) is disordered. Serine 6 carries the phosphoserine modification. At threonine 31 the chain carries Phosphothreonine. Positions 135, 166, and 169 each coordinate Fe cation. The active site involves tyrosine 173. Residues glutamate 229, glutamate 263, and histidine 266 each contribute to the Fe cation site.

It belongs to the ribonucleoside diphosphate reductase small chain family. In terms of assembly, heterodimer of a large and a small subunit. The cofactor is Fe cation.

It localises to the cytoplasm. It catalyses the reaction a 2'-deoxyribonucleoside 5'-diphosphate + [thioredoxin]-disulfide + H2O = a ribonucleoside 5'-diphosphate + [thioredoxin]-dithiol. In terms of biological role, provides the precursors necessary for DNA synthesis. Catalyzes the biosynthesis of deoxyribonucleotides from the corresponding ribonucleotides. The protein is Ribonucleoside-diphosphate reductase subunit M2 (rrm2) of Danio rerio (Zebrafish).